Reading from the N-terminus, the 145-residue chain is Lysozyme-like protein 4 (145 aa).

The N-terminal stretch at 1–19 is a signal peptide; sequence MQLYLVLLLISYLLTPIGA. Positions 20–145 constitute a C-type lysozyme domain; the sequence is SILGRCTVAK…LDRWLDGCDL (126 aa). 4 disulfide bridges follow: cysteine 25-cysteine 143, cysteine 49-cysteine 130, cysteine 84-cysteine 95, and cysteine 91-cysteine 109. Glutamate 54 is a catalytic residue.

It belongs to the glycosyl hydrolase 22 family. As to quaternary structure, monomer. As to expression, expressed strongly in testis and in epididymis, and weakly in brain and lung. Detected in sperm (at protein level).

The protein localises to the secreted. It is found in the cytoplasmic vesicle. The protein resides in the secretory vesicle. It localises to the acrosome. Its subcellular location is the cell projection. The protein localises to the cilium. It is found in the flagellum. May be involved in fertilization. Has no detectable bacteriolytic in vitro. Has no lysozyme activity in vitro. This chain is Lysozyme-like protein 4 (Lyzl4), found in Mus musculus (Mouse).